The chain runs to 682 residues: Tetratricopeptide repeat protein 39B (682 aa).

TPR repeat units follow at residues 393 to 426 and 626 to 659; these read SLVL…QEEW and PFTL…YKDY.

This sequence belongs to the TTC39 family.

Regulates high density lipoprotein (HDL) cholesterol metabolism by promoting the ubiquitination and degradation of the oxysterols receptors LXR (NR1H2 and NR1H3). The sequence is that of Tetratricopeptide repeat protein 39B from Homo sapiens (Human).